Consider the following 328-residue polypeptide: Cell division protein ZipA (328 aa).

Topologically, residues 1–4 (MDLN) are periplasmic. Residues 5-25 (TILIIVGIVALVALIVHGLWS) form a helical membrane-spanning segment. Topologically, residues 26–328 (NRREKSKYFD…NAEQAYLARV (303 aa)) are cytoplasmic. The disordered stretch occupies residues 44–82 (SLTSRSHTQEEMVQPNNISPNTYVENGHTPIPQPTTEKL). The segment covering 57–67 (QPNNISPNTYV) has biased composition (polar residues).

It belongs to the ZipA family. Interacts with FtsZ via their C-terminal domains.

Its subcellular location is the cell inner membrane. In terms of biological role, essential cell division protein that stabilizes the FtsZ protofilaments by cross-linking them and that serves as a cytoplasmic membrane anchor for the Z ring. Also required for the recruitment to the septal ring of downstream cell division proteins. This is Cell division protein ZipA from Haemophilus influenzae (strain ATCC 51907 / DSM 11121 / KW20 / Rd).